We begin with the raw amino-acid sequence, 498 residues long: Succinate-semialdehyde dehydrogenase [NADP(+)] 1 (498 aa).

247–252 (GSTNVG) lines the NAD(+) pocket. Active-site residues include Glu-269 and Cys-303.

Belongs to the aldehyde dehydrogenase family. Homotetramer.

The protein localises to the cytoplasm. It carries out the reaction succinate semialdehyde + NAD(+) + H2O = succinate + NADH + 2 H(+). The enzyme catalyses succinate semialdehyde + NADP(+) + H2O = succinate + NADPH + 2 H(+). Its pathway is amino-acid degradation; 4-aminobutanoate degradation. Its function is as follows. Catalyzes the oxidation of succinate semialdehyde to succinate. Can utilize both NAD(+) or NADP(+) as a coenzyme. Functions in a gamma-aminobutyrate (GABA) degradation pathway that allows growth utilizing GABA as a nitrogen source. Functions in the GABA shunt, which allows to bypass 2 reactions in the TCA cycle by removing alpha-ketoglutarate from the cycle and feeding succinate and NADH back into the cycle. This Schizosaccharomyces pombe (strain 972 / ATCC 24843) (Fission yeast) protein is Succinate-semialdehyde dehydrogenase [NADP(+)] 1 (ssd1).